The primary structure comprises 396 residues: Interleukin enhancer-binding factor 2 homolog (396 aa).

The region spanning 22 to 379 (KTFVPRHPFD…KKEGDLEEDI (358 aa)) is the DZF domain. A disordered region spans residues 367–396 (PTDKKEGDLEEDIDMIENENEEEGSDDGAE). The segment covering 374–396 (DLEEDIDMIENENEEEGSDDGAE) has biased composition (acidic residues).

The protein resides in the nucleus. Functionally, may regulate transcription of undefined genes. In Drosophila melanogaster (Fruit fly), this protein is Interleukin enhancer-binding factor 2 homolog.